The following is a 229-amino-acid chain: 3-dehydroquinate dehydratase (229 aa).

Residues 29-31 and Arg-56 each bind 3-dehydroquinate; that span reads ELR. His-120 serves as the catalytic Proton donor/acceptor. The active-site Schiff-base intermediate with substrate is the Lys-146. Residues Arg-187, Thr-208, and Gln-212 each coordinate 3-dehydroquinate.

This sequence belongs to the type-I 3-dehydroquinase family. In terms of assembly, homodimer.

The enzyme catalyses 3-dehydroquinate = 3-dehydroshikimate + H2O. Its pathway is metabolic intermediate biosynthesis; chorismate biosynthesis; chorismate from D-erythrose 4-phosphate and phosphoenolpyruvate: step 3/7. Functionally, involved in the third step of the chorismate pathway, which leads to the biosynthesis of aromatic amino acids. Catalyzes the cis-dehydration of 3-dehydroquinate (DHQ) and introduces the first double bond of the aromatic ring to yield 3-dehydroshikimate. The protein is 3-dehydroquinate dehydratase of Haloarcula marismortui (strain ATCC 43049 / DSM 3752 / JCM 8966 / VKM B-1809) (Halobacterium marismortui).